The sequence spans 991 residues: Receptor-like protein kinase HAIKU2 (991 aa).

An N-terminal signal peptide occupies residues 1–19 (MLRLLFIVRLLFLMPLASS). The Extracellular portion of the chain corresponds to 20–616 (RSNHSEEVEN…KRKHLSKVDM (597 aa)). Residue asparagine 22 is glycosylated (N-linked (GlcNAc...) asparagine). 21 LRR repeats span residues 66 to 90 (DGNVVEINLGSRSLINRDDDGRFTD), 99 to 123 (LKLLEKLVLGNNSLRGQIGTNLGKC), 125 to 148 (RLRYLDLGINNFSGEFPAIDSLQL), 150 to 170 (EFLSLNASGISGIFPWSSLKD), 171 to 196 (LKRLSFLSVGDNRFGSHPFPREILNL), 197 to 220 (TALQWVYLSNSSITGKIPEGIKNL), 221 to 244 (VRLQNLELSDNQISGEIPKEIVQL), 246 to 267 (NLRQLEIYSNDLTGKLPLGFRN), 269 to 291 (TNLRNFDASNNSLEGDLSELRFL), 292 to 314 (KNLVSLGMFENRLTGEIPKEFGD), 315 to 339 (FKSLAALSLYRNQLTGKLPRRLGSW), 341 to 363 (AFKYIDVSENFLEGQIPPYMCKK), 365 to 387 (VMTHLLMLQNRFTGQFPESYAKC), 388 to 411 (KTLIRLRVSNNSLSGMIPSGIWGL), 413 to 435 (NLQFLDLASNYFEGNLTGDIGNA), 436 to 459 (KSLGSLDLSNNRFSGSLPFQISGA), 461 to 482 (SLVSVNLRMNKFSGIVPESFGK), 483 to 508 (LKELSSLILDQNNLSGAIPKSLGLCT), 510 to 531 (LVDLNFAGNSLSEEIPESLGSL), 532 to 554 (KLLNSLNLSGNKLSGMIPVGLSA), and 555 to 578 (LKLSLLDLSNNQLTGSVPESLVSG). N-linked (GlcNAc...) asparagine glycans are attached at residues asparagine 109, asparagine 135, asparagine 155, asparagine 195, and asparagine 206. Asparagine 267 and asparagine 278 each carry an N-linked (GlcNAc...) asparagine glycan. 2 N-linked (GlcNAc...) asparagine glycosylation sites follow: asparagine 397 and asparagine 427. Asparagine 495 is a glycosylation site (N-linked (GlcNAc...) asparagine). N-linked (GlcNAc...) asparagine glycosylation occurs at asparagine 538. A helical transmembrane segment spans residues 617–637 (CFIVAAILALFFLFSYVIFKI). The Cytoplasmic segment spans residues 638 to 991 (RRDKLNKTVQ…SANDEITKVV (354 aa)). A Protein kinase domain is found at 671–970 (IKSENIIGRG…SMLEKIEPSY (300 aa)). Residues 677 to 685 (IGRGGQGNV) and lysine 699 each bind ATP. Phosphotyrosine is present on residues tyrosine 762 and tyrosine 801. The active-site Proton acceptor is the aspartate 814. Residues tyrosine 859 and tyrosine 866 each carry the phosphotyrosine modification. The residue at position 867 (threonine 867) is a Phosphothreonine. Residues 972-991 (KNSGEASYGESANDEITKVV) form a disordered region.

The protein belongs to the protein kinase superfamily. Ser/Thr protein kinase family. Expressed in the endosperm of fertilized ovules.

It is found in the membrane. The enzyme catalyses L-seryl-[protein] + ATP = O-phospho-L-seryl-[protein] + ADP + H(+). It catalyses the reaction L-threonyl-[protein] + ATP = O-phospho-L-threonyl-[protein] + ADP + H(+). Functionally, modulates the seed size by negatively regulating the cellularization of syncytial endosperm. In Arabidopsis thaliana (Mouse-ear cress), this protein is Receptor-like protein kinase HAIKU2 (IKU2).